A 175-amino-acid chain; its full sequence is uncharacterized protein (175 aa).

A compositionally biased stretch (polar residues) spans 1–10 (MSKKINNNKT). The interval 1 to 21 (MSKKINNNKTPRNKVKNNNVS) is disordered.

This is an uncharacterized protein from Ureaplasma parvum serovar 3 (strain ATCC 700970).